We begin with the raw amino-acid sequence, 921 residues long: Isoleucine--tRNA ligase (921 aa).

Positions 57–67 match the 'HIGH' region motif; the sequence is PYANGDIHMGH. Glu552 serves as a coordination point for L-isoleucyl-5'-AMP. Residues 593 to 597 carry the 'KMSKS' region motif; sequence KMSKS. Lys596 lines the ATP pocket. Residues Cys888, Cys891, Cys908, and Cys911 each contribute to the Zn(2+) site.

It belongs to the class-I aminoacyl-tRNA synthetase family. IleS type 1 subfamily. Monomer. It depends on Zn(2+) as a cofactor.

The protein localises to the cytoplasm. It carries out the reaction tRNA(Ile) + L-isoleucine + ATP = L-isoleucyl-tRNA(Ile) + AMP + diphosphate. Functionally, catalyzes the attachment of isoleucine to tRNA(Ile). As IleRS can inadvertently accommodate and process structurally similar amino acids such as valine, to avoid such errors it has two additional distinct tRNA(Ile)-dependent editing activities. One activity is designated as 'pretransfer' editing and involves the hydrolysis of activated Val-AMP. The other activity is designated 'posttransfer' editing and involves deacylation of mischarged Val-tRNA(Ile). The sequence is that of Isoleucine--tRNA ligase from Bacillus mycoides (strain KBAB4) (Bacillus weihenstephanensis).